Reading from the N-terminus, the 225-residue chain is NAD(P)H-quinone oxidoreductase subunit K, chloroplastic (225 aa).

Cys43, Cys44, Cys108, and Cys139 together coordinate [4Fe-4S] cluster.

Belongs to the complex I 20 kDa subunit family. In terms of assembly, NDH is composed of at least 16 different subunits, 5 of which are encoded in the nucleus. Requires [4Fe-4S] cluster as cofactor.

The protein localises to the plastid. It localises to the chloroplast thylakoid membrane. The catalysed reaction is a plastoquinone + NADH + (n+1) H(+)(in) = a plastoquinol + NAD(+) + n H(+)(out). The enzyme catalyses a plastoquinone + NADPH + (n+1) H(+)(in) = a plastoquinol + NADP(+) + n H(+)(out). Functionally, NDH shuttles electrons from NAD(P)H:plastoquinone, via FMN and iron-sulfur (Fe-S) centers, to quinones in the photosynthetic chain and possibly in a chloroplast respiratory chain. The immediate electron acceptor for the enzyme in this species is believed to be plastoquinone. Couples the redox reaction to proton translocation, and thus conserves the redox energy in a proton gradient. The chain is NAD(P)H-quinone oxidoreductase subunit K, chloroplastic from Arabidopsis thaliana (Mouse-ear cress).